The sequence spans 133 residues: MSVAAAITAGASAAQAGTGLIGSIANAIHEGTRLKLQGQALGAQIKFQEAENKFNRDRFEFDKLNTERWFRLAKEQQSLVYELNTKGPAMRAQAMMDAGFRNNLYSNGNQLTFNEVREAQLSAEKRFYNPSLF.

It belongs to the vesivirus VP2 protein family. As to quaternary structure, homooligomer. The portal-like structure consists in 12 copies of VP2. Interacts with capsid protein VP1.

It localises to the virion. The protein resides in the host cytoplasm. Minor structural protein that forms a portal-like structure at a unique three-fold axis of symmetry, following binding to the host receptor. The channel formed by VP2 may allow the delivery of the viral genome through the host endosomal membrane. This chain is Minor capsid protein VP2, found in Canis lupus familiaris (Dog).